We begin with the raw amino-acid sequence, 639 residues long: uncharacterized protein (639 aa).

This is an uncharacterized protein from Mus musculus (Mouse).